The following is a 1042-amino-acid chain: Probable inorganic carbon transporter subunit DabA (1042 aa).

Positions 462, 464, 721, and 736 each coordinate Zn(2+).

Belongs to the inorganic carbon transporter (TC 9.A.2) DabA family. In terms of assembly, forms a complex with DabB. The cofactor is Zn(2+).

It is found in the cell inner membrane. Functionally, part of an energy-coupled inorganic carbon pump. The chain is Probable inorganic carbon transporter subunit DabA from Nitrosomonas eutropha (strain DSM 101675 / C91 / Nm57).